The following is a 469-amino-acid chain: L-seryl-tRNA(Sec) selenium transferase (469 aa).

An N6-(pyridoxal phosphate)lysine modification is found at K295.

It belongs to the SelA family. Pyridoxal 5'-phosphate serves as cofactor.

It is found in the cytoplasm. The catalysed reaction is L-seryl-tRNA(Sec) + selenophosphate + H(+) = L-selenocysteinyl-tRNA(Sec) + phosphate. It participates in aminoacyl-tRNA biosynthesis; selenocysteinyl-tRNA(Sec) biosynthesis; selenocysteinyl-tRNA(Sec) from L-seryl-tRNA(Sec) (bacterial route): step 1/1. Functionally, converts seryl-tRNA(Sec) to selenocysteinyl-tRNA(Sec) required for selenoprotein biosynthesis. This chain is L-seryl-tRNA(Sec) selenium transferase, found in Methylocella silvestris (strain DSM 15510 / CIP 108128 / LMG 27833 / NCIMB 13906 / BL2).